A 146-amino-acid polypeptide reads, in one-letter code: Neutral phospholipase A2 B (146 aa).

The first 21 residues, 1-21, serve as a signal peptide directing secretion; it reads MNPAHLLILAAVCVSPLGASS. A propeptide spanning residues 22 to 27 is cleaved from the precursor; sequence NRPMPL. 7 cysteine pairs are disulfide-bonded: Cys38-Cys98, Cys53-Cys145, Cys55-Cys71, Cys70-Cys126, Cys77-Cys119, Cys87-Cys112, and Cys105-Cys117. Ca(2+) is bound by residues Tyr54, Gly56, and Gly58. His74 is a catalytic residue. Ca(2+) is bound at residue Asp75. Residue Asp120 is part of the active site.

This sequence belongs to the phospholipase A2 family. Group I subfamily. D49 sub-subfamily. It depends on Ca(2+) as a cofactor. In terms of tissue distribution, expressed by the venom gland.

Its subcellular location is the secreted. It carries out the reaction a 1,2-diacyl-sn-glycero-3-phosphocholine + H2O = a 1-acyl-sn-glycero-3-phosphocholine + a fatty acid + H(+). Its function is as follows. PLA2 catalyzes the calcium-dependent hydrolysis of the 2-acyl groups in 3-sn-phosphoglycerides. The sequence is that of Neutral phospholipase A2 B from Naja sputatrix (Malayan spitting cobra).